The following is a 235-amino-acid chain: 2-C-methyl-D-erythritol 4-phosphate cytidylyltransferase (235 aa).

It belongs to the IspD/TarI cytidylyltransferase family. IspD subfamily.

It catalyses the reaction 2-C-methyl-D-erythritol 4-phosphate + CTP + H(+) = 4-CDP-2-C-methyl-D-erythritol + diphosphate. It participates in isoprenoid biosynthesis; isopentenyl diphosphate biosynthesis via DXP pathway; isopentenyl diphosphate from 1-deoxy-D-xylulose 5-phosphate: step 2/6. Functionally, catalyzes the formation of 4-diphosphocytidyl-2-C-methyl-D-erythritol from CTP and 2-C-methyl-D-erythritol 4-phosphate (MEP). The protein is 2-C-methyl-D-erythritol 4-phosphate cytidylyltransferase of Pseudomonas entomophila (strain L48).